Reading from the N-terminus, the 2839-residue chain is PDZ domain-containing protein 2 (2839 aa).

In terms of domain architecture, PDZ 1 spans 85-182 (LSFGNIPVFG…LIMLRRFKHK (98 aa)). Residues 185–318 (STYNGNSSNS…RFSKGGKTDF (134 aa)) are disordered. A compositionally biased stretch (low complexity) spans 189–202 (GNSSNSSEPGETPT). Basic and acidic residues predominate over residues 280–296 (HLERSEVDRGTEHRIPK). The 86-residue stretch at 334 to 419 (KMELLKESDG…MVQLVVASKE (86 aa)) folds into the PDZ 2 domain. Polar residues predominate over residues 437-447 (TSSVEDVSSWT). Residues 437-501 (TSSVEDVSSW…PKQGSNKIKL (65 aa)) are disordered. Positions 448-461 (DNEDQEADGEEDEG) are enriched in acidic residues. Position 568 is a phosphoserine (Ser568). One can recognise a PDZ 3 domain in the interval 586 to 672 (IIGLYKEKGK…GLFVLTVRTK (87 aa)). Over residues 678 to 697 (LTPCSTPTHMSRSASPNFNT) the composition is skewed to polar residues. The disordered stretch occupies residues 678–723 (LTPCSTPTHMSRSASPNFNTSGGASAGGSDEGSSSSLGRKTPGPKD). The region spanning 728-813 (EVTLNKEPRV…GPVRLVIGRH (86 aa)) is the PDZ 4 domain. Polar residues-rich tracts occupy residues 832–843 (YQESKEANSSPG) and 894–908 (GCST…PSTS). Disordered regions lie at residues 832 to 852 (YQES…KSPS) and 879 to 921 (DFMV…ANSL). Phosphoserine is present on residues Ser944 and Ser948. Disordered stretches follow at residues 984–1033 (SLPG…ISAP), 1062–1155 (SAEA…PCDL), 1216–1493 (KAAS…GAPA), 1530–1620 (FHED…LPTQ), 1638–1712 (PRES…SPLS), 1809–1865 (NQGT…DLSK), 1892–1976 (GKAK…SVSD), 2009–2079 (PDRG…GNIM), 2135–2166 (QVAE…SMAK), 2178–2211 (IRKA…GEDH), 2232–2251 (HFGR…DSQV), 2353–2383 (AKSG…GSLG), 2426–2481 (SRQN…SRSK), and 2516–2564 (ITPR…GEAA). Basic and acidic residues predominate over residues 1012–1022 (MDVHNQEERPR). Composition is skewed to polar residues over residues 1092–1111 (RTDT…QQKS), 1138–1147 (SGSQTVNLTG), 1221–1236 (LGQQ…SDLI), 1250–1269 (SKTS…SQPA), 1305–1315 (TRSASETSTPH), 1384–1401 (SVSS…PSTD), and 1440–1453 (RSPS…GSQE). The span at 1662–1672 (SSQPSSLLEMS) shows a compositional bias: low complexity. Polar residues predominate over residues 1698–1711 (EVTSASSAMENSPL). At Ser1850 the chain carries Phosphoserine. Residues 1919 to 1931 (SPQTSHKTLSKAV) show a composition bias toward polar residues. Positions 1936-1945 (HVADHEDPDR) are enriched in basic and acidic residues. The span at 2139 to 2152 (SSTSHPSSLPSHAS) shows a compositional bias: low complexity. The span at 2370–2383 (GRRSSGSIVSGSLG) shows a compositional bias: low complexity. Polar residues-rich tracts occupy residues 2426-2437 (SRQNPPETSSKG), 2470-2480 (RHTQPSPVSRS), and 2546-2559 (PKTS…SASD). The PDZ 5 domain occupies 2622–2706 (FIVLNRKEGS…HKDALVVIKK (85 aa)). Positions 2709–2729 (DQPRPSARQEPPTANGKGLLS) are disordered. In terms of domain architecture, PDZ 6 spans 2750 to 2835 (CVEVLKTSAG…GPVQLLIRKH (86 aa)).

In terms of assembly, interacts with SCN10A, CTNND2 and PKP4. A secreted form is produced by caspase-mediated proteolytic cleavage. In terms of tissue distribution, isoform 2 is expressed (at protein level) in prostate and many prostate tumors.

Its subcellular location is the nucleus. The protein resides in the cytoplasm. It localises to the endoplasmic reticulum. The protein localises to the secreted. This Homo sapiens (Human) protein is PDZ domain-containing protein 2 (PDZD2).